A 504-amino-acid chain; its full sequence is Cytochrome P450 4A24 (504 aa).

Helical transmembrane passes span 6–26 (LASA…LLLL) and 112–132 (VVYR…NGQT). Cys451 serves as a coordination point for heme.

This sequence belongs to the cytochrome P450 family. The cofactor is heme.

It is found in the endoplasmic reticulum membrane. It catalyses the reaction an omega-methyl-long-chain fatty acid + reduced [NADPH--hemoprotein reductase] + O2 = an omega-hydroxy-long-chain fatty acid + oxidized [NADPH--hemoprotein reductase] + H2O + H(+). Catalyzes the omega- and (omega-1)-hydroxylation of various fatty acids such as laurate and palmitate. Has no activity toward taurochenodeoxycholic acid. The sequence is that of Cytochrome P450 4A24 (CYP4A24) from Sus scrofa (Pig).